Consider the following 578-residue polypeptide: NADPH oxidase 4 (578 aa).

At 1–16 the chain is on the cytoplasmic side; it reads MAVSWRSWLANEGVKH. A helical membrane pass occupies residues 17 to 37; sequence LCLFIWLSMNVLLFWKTFLLY. The Extracellular segment spans residues 38 to 62; sequence NQGPEYHYLHQMLGLGLCLSRASAS. The Ferric oxidoreductase domain maps to 58–303; sequence RASASVLNLN…YCAERLYRYI (246 aa). The helical transmembrane segment at 63–83 threads the bilayer; it reads VLNLNCSLILLPMCRTLLAYL. Residues 84–103 are Cytoplasmic-facing; it reads RGSQKVPSRRTRRLLDKSRT. Residues 104-124 traverse the membrane as a helical segment; it reads FHITCGVTICIFSGVHVAAHL. Residues 125 to 154 lie on the Extracellular side of the membrane; the sequence is VNALNFSVNYSEDFVELNAARYRDEDPRKL. A glycan (N-linked (GlcNAc...) asparagine) is linked at asparagine 133. Residues 155–175 form a helical membrane-spanning segment; sequence LFTTVPGLTGVCMVVVLFLMI. The Cytoplasmic segment spans residues 176–188; sequence TASTYAIRVSNYD. The helical transmembrane segment at 189–209 threads the bilayer; sequence IFWYTHNLFFVFYMLLTLHVS. The Extracellular portion of the chain corresponds to 210–424; sequence GGLLKYQTNL…SPFEESLNYE (215 aa). Residues 218–273 are E-loop; essential for H2O2 generating catalytic activity; that stretch reads NLDTHPPGCISLNRTSSQNISLPEYFSEHFHEPFPEGFSKPAEFTQHKFVKICMEE. The N-linked (GlcNAc...) asparagine glycan is linked to asparagine 230. Residues 248–575 form a mediates interaction with TLR4 region; sequence HEPFPEGFSK…YGTRFEYNKE (328 aa). The 116-residue stretch at 304-419 folds into the FAD-binding FR-type domain; it reads RSNKPVTIIS…DGPFGSPFEE (116 aa). Residues 425–445 form a helical membrane-spanning segment; the sequence is VSLCVAGGIGVTPFASILNTL. The Cytoplasmic portion of the chain corresponds to 446–578; it reads LDDWKPYKLR…RFEYNKESFS (133 aa).

In terms of assembly, interacts with protein disulfide isomerase. Interacts with, relocalizes and stabilizes CYBA/p22phox. Interacts with TLR4. Interacts with PPP1R15A. Interacts with LRRC8A; this interaction prevents the ubiquitin-mediated degradation of LRRC8A. Heme serves as cofactor. In terms of processing, deubiquitinated by USP19. N-glycosylated and glycosylation is required for its proper function. Post-translationally, N-glycosylated. In terms of tissue distribution, expressed by distal tubular cells in kidney cortex and in endothelial cells (at protein level). Widely expressed. Strongly expressed in kidney and to a lower extent in heart, adipocytes, hepatoma, endothelial cells, skeletal muscle, brain, several brain tumor cell lines and airway epithelial cells.

Its subcellular location is the cytoplasm. It is found in the endoplasmic reticulum membrane. The protein localises to the cell membrane. It localises to the cell junction. The protein resides in the focal adhesion. Its subcellular location is the nucleus. It is found in the nucleolus. The protein localises to the perinuclear region. The catalysed reaction is NADPH + 2 O2 = 2 superoxide + NADP(+) + H(+). It carries out the reaction NADPH + O2 + H(+) = H2O2 + NADP(+). Its activity is regulated as follows. Inhibited by plumbagin. Activated by phorbol 12-myristate 13-acetate (PMA). Activated by insulin. Inhibited by diphenylene iodonium. Its function is as follows. NADPH oxidase that catalyzes predominantly the reduction of oxygen to H2O2. Can also catalyze to a smaller extent, the reduction of oxygen to superoxide. May function as an oxygen sensor regulating the KCNK3/TASK-1 potassium channel and HIF1A activity. May regulate insulin signaling cascade. May play a role in apoptosis, bone resorption and lipolysaccharide-mediated activation of NFKB. May produce superoxide in the nucleus and play a role in regulating gene expression upon cell stimulation. Promotes ferroptosis, reactive oxygen species production and reduced glutathione (GSH) levels by activating NLRP3 inflammasome activation and cytokine release. Functionally, NADPH oxidase that catalyzes the generation of superoxide from molecular oxygen utilizing NADPH as an electron donor. Involved in redox signaling in vascular cells. Modulates the nuclear activation of ERK1/2 and the ELK1 transcription factor, and is capable of inducing nuclear DNA damage. In terms of biological role, lacks superoxide-generating NADPH oxidase activity. The sequence is that of NADPH oxidase 4 (NOX4) from Homo sapiens (Human).